The sequence spans 775 residues: 5-methyltetrahydropteroyltriglutamate--homocysteine methyltransferase (775 aa).

5-methyltetrahydropteroyltri-L-glutamate-binding positions include 16–19 and K115; that span reads REMK. L-homocysteine-binding positions include 435–437 and E488; that span reads IGS. L-methionine-binding positions include 435 to 437 and E488; that span reads IGS. Residues 519–520 and W565 contribute to the 5-methyltetrahydropteroyltri-L-glutamate site; that span reads RC. D603 is an L-homocysteine binding site. D603 provides a ligand contact to L-methionine. E609 is a 5-methyltetrahydropteroyltri-L-glutamate binding site. 3 residues coordinate Zn(2+): H645, C647, and E669. The active-site Proton donor is H698. C730 lines the Zn(2+) pocket.

It belongs to the vitamin-B12 independent methionine synthase family. Zn(2+) serves as cofactor.

It carries out the reaction 5-methyltetrahydropteroyltri-L-glutamate + L-homocysteine = tetrahydropteroyltri-L-glutamate + L-methionine. It participates in amino-acid biosynthesis; L-methionine biosynthesis via de novo pathway; L-methionine from L-homocysteine (MetE route): step 1/1. Its function is as follows. Catalyzes the transfer of a methyl group from 5-methyltetrahydrofolate to homocysteine resulting in methionine formation. In Coxiella burnetii (strain CbuG_Q212) (Coxiella burnetii (strain Q212)), this protein is 5-methyltetrahydropteroyltriglutamate--homocysteine methyltransferase.